Here is a 432-residue protein sequence, read N- to C-terminus: Probable exopolygalacturonase X (432 aa).

The N-terminal stretch at 1 to 23 (MKFSYSFVQVVTLLLSLSPSVEG) is a signal peptide. N-linked (GlcNAc...) asparagine glycans are attached at residues Asn113, Asn129, and Asn199. The stretch at 231-252 (SDNIVIQNSVINNGDDCVSFKP) is one PbH1 1 repeat. Catalysis depends on Asp245, which acts as the Proton donor. The cysteines at positions 247 and 264 are disulfide-linked. N-linked (GlcNAc...) asparagine glycosylation is found at Asn253 and Asn265. 3 PbH1 repeats span residues 254 to 274 (STNI…SVGS), 285 to 306 (VQNV…RIKV), and 327 to 348 (VKNV…EVTQ). The active site involves His268. N-linked (GlcNAc...) asparagine glycans are attached at residues Asn292, Asn297, Asn329, Asn354, and Asn364. One copy of the PbH1 5 repeat lies at 362-394 (PSNLTISDIHFKNFRGTTSGKRDPNVGTIVCSS). A disulfide bridge links Cys392 with Cys398.

This sequence belongs to the glycosyl hydrolase 28 family.

It localises to the secreted. The enzyme catalyses [(1-&gt;4)-alpha-D-galacturonosyl](n) + H2O = alpha-D-galacturonate + [(1-&gt;4)-alpha-D-galacturonosyl](n-1). Specific in hydrolyzing the terminal glycosidic bond of polygalacturonic acid and oligogalacturonates. The polypeptide is Probable exopolygalacturonase X (pgaX) (Aspergillus fumigatus (strain CBS 144.89 / FGSC A1163 / CEA10) (Neosartorya fumigata)).